A 191-amino-acid polypeptide reads, in one-letter code: Pentapeptide repeat protein MfpA (191 aa).

One can recognise a Pentapeptide repeat domain in the interval Cys115–Gly154.

This sequence belongs to the pentapeptide repeat protein family. In terms of assembly, homodimer. Probably interacts with DNA gyrase.

In terms of biological role, when present on multicopy plasmids confers increased resistance to fluoroquinolone antibiotics such as ciprofloxacin and sparfloxacin but not the quinolone nalidixic acid. Forms a structure that exhibits size, shape and electrostatic similarity to B-form DNA; it may bind to DNA gyrase which is postulated to protect it from fluoroquinolones. The polypeptide is Pentapeptide repeat protein MfpA (Mycolicibacterium smegmatis (strain ATCC 700084 / mc(2)155) (Mycobacterium smegmatis)).